The primary structure comprises 700 residues: Elongation factor G (700 aa).

The 283-residue stretch at 8–290 (ERYRNIGISA…GVIDFMPSPI (283 aa)) folds into the tr-type G domain. Residues 17 to 24 (AHIDAGKT), 88 to 92 (DTPGH), and 142 to 145 (NKMD) each bind GTP.

It belongs to the TRAFAC class translation factor GTPase superfamily. Classic translation factor GTPase family. EF-G/EF-2 subfamily.

Its subcellular location is the cytoplasm. In terms of biological role, catalyzes the GTP-dependent ribosomal translocation step during translation elongation. During this step, the ribosome changes from the pre-translocational (PRE) to the post-translocational (POST) state as the newly formed A-site-bound peptidyl-tRNA and P-site-bound deacylated tRNA move to the P and E sites, respectively. Catalyzes the coordinated movement of the two tRNA molecules, the mRNA and conformational changes in the ribosome. In Methylibium petroleiphilum (strain ATCC BAA-1232 / LMG 22953 / PM1), this protein is Elongation factor G.